A 101-amino-acid chain; its full sequence is MAKLALIEREKKRARLVAKFAAKRDALKAIVEDQSKSEEERYEARLELQQLPRNANPTRQRNRCAITGRPRGTFRKFGLARNKIREIAFRGEIPGLTKASW.

The protein belongs to the universal ribosomal protein uS14 family. In terms of assembly, part of the 30S ribosomal subunit. Contacts proteins S3 and S10.

Its function is as follows. Binds 16S rRNA, required for the assembly of 30S particles and may also be responsible for determining the conformation of the 16S rRNA at the A site. This Burkholderia lata (strain ATCC 17760 / DSM 23089 / LMG 22485 / NCIMB 9086 / R18194 / 383) protein is Small ribosomal subunit protein uS14.